Here is a 154-residue protein sequence, read N- to C-terminus: MAASRRLMKELEEIRKCGMKNFRNIRVDEANLLTWQGLIVPDNPPYDKGAFRIEINFPAEYPFKPPKITFKTKIYHPNIDEKGQVCLPVISAENWKPATKTDQVIQSLIALVNDPQPEHPLRADLAEEYSKDRKKFCKNAEEFTKKYGEKRPVD.

The UBC core domain maps to 2–149; that stretch reads AASRRLMKEL…AEEFTKKYGE (148 aa). The Glycyl thioester intermediate role is filled by Cys-86. Lys-131 carries the post-translational modification N6-acetyllysine.

Belongs to the ubiquitin-conjugating enzyme family. In terms of assembly, interacts with PRKN; involved in ubiquitination and degradation of misfolded proteins. Interacts with UBE3A. Interacts with CCNB1IP1, CBL, ZAP70, RNF19A, RNF19B and RNF144B. Interacts with ARIH1. Interacts with ARIH2 (via RING-type 1). Interacts with NCOA1; they functionally interact to regulate progesterone receptor transcriptional activity. Interacts with NDFIP1 (via N-terminus); the interaction mediates recruitment of UBE2L3 to ITCH and causes MAP3K7 ubiquitination. In terms of processing, ubiquitinated. The alteration of UBE2L3 protein levels during the S-phase of the cell cycle is due to ubiquitin-dependent proteasomal degradation. Autoubiquitinated in vitro.

The protein localises to the nucleus. Its subcellular location is the cytoplasm. It catalyses the reaction S-ubiquitinyl-[E1 ubiquitin-activating enzyme]-L-cysteine + [E2 ubiquitin-conjugating enzyme]-L-cysteine = [E1 ubiquitin-activating enzyme]-L-cysteine + S-ubiquitinyl-[E2 ubiquitin-conjugating enzyme]-L-cysteine.. Its pathway is protein modification; protein ubiquitination. Its function is as follows. Ubiquitin-conjugating enzyme E2 that specifically acts with HECT-type and RBR family E3 ubiquitin-protein ligases. Does not function with most RING-containing E3 ubiquitin-protein ligases because it lacks intrinsic E3-independent reactivity with lysine: in contrast, it has activity with the RBR family E3 enzymes, such as PRKN, RNF31 and ARIH1, that function like RING-HECT hybrids. Accepts ubiquitin from the E1 complex and catalyzes its covalent attachment to other proteins. Mediates ubiquitination by the CUL9-RBX1 complex. In vitro catalyzes 'Lys-11'-linked polyubiquitination. Involved in the selective degradation of short-lived and abnormal proteins. Down-regulated during the S-phase it is involved in progression through the cell cycle. Regulates nuclear hormone receptors transcriptional activity. May play a role in myelopoiesis. This chain is Ubiquitin-conjugating enzyme E2 L3 (UBE2L3), found in Pongo abelii (Sumatran orangutan).